Consider the following 882-residue polypeptide: Liprin-beta-2 (882 aa).

The stretch at 101 to 303 (AASNETYQER…DKDRRIEELT (203 aa)) forms a coiled coil. Phosphoserine is present on residues S328, S362, and S386. A disordered region spans residues 339–554 (RKWNTTNKSP…SRTRDTKGQK (216 aa)). Residues 388–399 (EDLRRESGDKCV) are compositionally biased toward basic and acidic residues. Composition is skewed to polar residues over residues 442–457 (PTASLQPDSSGSSQPK) and 481–495 (SSASSGTESSPQSPV). Phosphoserine occurs at positions 502 and 518. Positions 502 to 515 (SPKGIKKFWGKIRR) are enriched in basic residues. SAM domains lie at 564-628 (WSTE…INAK), 636-699 (LDHI…LHVN), and 724-789 (WSNH…KFNA).

This sequence belongs to the liprin family. Liprin-beta subfamily. As to quaternary structure, forms homodimers and heterodimers. As to expression, expressed widely. Strong expression in liver, kidney, intestine, heart, lung and testis. Low expression in brain and thymus.

May regulate the disassembly of focal adhesions. Did not bind receptor-like tyrosine phosphatases type 2A. The protein is Liprin-beta-2 (Ppfibp2) of Mus musculus (Mouse).